A 251-amino-acid polypeptide reads, in one-letter code: Prothoracicostatic peptides (251 aa).

The disordered stretch occupies residues Met-1–Gln-22. A propeptide spanning residues Met-1–Gly-77 is cleaved from the precursor. Trp-89 is subject to Tryptophan amide. Positions Gly-93 to Gly-138 are excised as a propeptide. Trp-152 carries the post-translational modification Tryptophan amide. Positions Ala-156–Glu-187 are excised as a propeptide. 2 positions are modified to tryptophan amide: Trp-198 and Trp-228. Residues Met-227–Ala-251 form a disordered region.

Prothoracicostatic peptide 5: Expressed in antennal lobe (AL), corpora cardiaca (CC), corpora allata (CA) and gnathal ganglion (GNG) (at protein level). Expression in AL detected in all animals, in CC, CA and GNG in most (at protein level). Prothoracicostatic peptide 6: Expressed in antennal lobe (AL), corpora cardiaca (CC), corpora allata (CA) and gnathal ganglion (GNG) (at protein level). Expression in AL detected in all animals, expression in GNG in most animals, in CA and CC detected in some animals (at protein level). Prothoracicostatic peptide 7: Expressed in antennal lobe (AL), corpora cardiaca (CC), corpora allata (CA) and gnathal ganglion (GNG) (at protein level). Expression in AL, CA and CC detected in most animals, expression in GNG in some animals (at protein level). Prothoracicostatic peptide precursor-related peptide 2: Expressed in antennal lobe (AL), corpora cardiaca (CC) and corpora allata (CA) with expression detected in few animals (at protein level). Not expressed in gnathal ganglion (GNG) (at protein level). Prothoracicostatic peptide 8: Expressed in antennal lobe (AL), corpora cardiaca (CC), corpora allata (CA) and gnathal ganglion (GNG) (at protein level). Expression in AL detected in all animals, expression in GNG in most animals, in CA and CC detected in some animals (at protein level). Prothoracicostatic peptide precursor-related peptide 3: Expressed in antennal lobe (AL) in few animals (at protein level). Not expressed in corpora cardiaca (CC), corpora allata (CA) and gnathal ganglion (GNG) (at protein level).

The protein localises to the secreted. The polypeptide is Prothoracicostatic peptides (Agrotis ipsilon (Black cutworm moth)).